A 275-amino-acid chain; its full sequence is 2,3,4,5-tetrahydropyridine-2,6-dicarboxylate N-succinyltransferase (275 aa).

Positions 108 and 145 each coordinate substrate.

The protein belongs to the transferase hexapeptide repeat family. Homotrimer.

The protein localises to the cytoplasm. The catalysed reaction is (S)-2,3,4,5-tetrahydrodipicolinate + succinyl-CoA + H2O = (S)-2-succinylamino-6-oxoheptanedioate + CoA. Its pathway is amino-acid biosynthesis; L-lysine biosynthesis via DAP pathway; LL-2,6-diaminopimelate from (S)-tetrahydrodipicolinate (succinylase route): step 1/3. The protein is 2,3,4,5-tetrahydropyridine-2,6-dicarboxylate N-succinyltransferase of Maricaulis maris (strain MCS10) (Caulobacter maris).